The chain runs to 91 residues: Cell division protein CrgA (91 aa).

A compositionally biased stretch (polar residues) spans 1–24 (MPKSKITTEGSALPQSSSSATNRT). The segment at 1–28 (MPKSKITTEGSALPQSSSSATNRTPVKI) is disordered. Transmembrane regions (helical) follow at residues 38–58 (IAIMLGLMLLGLLWLVVNYLA) and 68–88 (LGPWNYGIGFGLAIIGLLMTM).

It belongs to the CrgA family.

It is found in the cell membrane. Functionally, involved in cell division. This is Cell division protein CrgA from Corynebacterium aurimucosum (strain ATCC 700975 / DSM 44827 / CIP 107346 / CN-1) (Corynebacterium nigricans).